A 188-amino-acid polypeptide reads, in one-letter code: Inosine triphosphate pyrophosphatase (188 aa).

Residue 11–16 (TGNKHK) participates in ITP binding. Glu-39 contacts Mg(2+). ITP-binding positions include Lys-51, 67–68 (DT), Lys-84, 143–146 (FGWN), and 171–172 (HR).

This sequence belongs to the HAM1 NTPase family. In terms of assembly, homodimer. Mg(2+) serves as cofactor. It depends on Mn(2+) as a cofactor.

It is found in the cytoplasm. The protein resides in the nucleus. It carries out the reaction ITP + H2O = IMP + diphosphate + H(+). The catalysed reaction is dITP + H2O = dIMP + diphosphate + H(+). The enzyme catalyses XTP + H2O = XMP + diphosphate + H(+). Its function is as follows. Pyrophosphatase that hydrolyzes non-canonical purine nucleotides such as inosine triphosphate (ITP), deoxyinosine triphosphate (dITP) or xanthosine 5'-triphosphate (XTP) to their respective monophosphate derivatives. The enzyme does not distinguish between the deoxy- and ribose forms. Probably excludes non-canonical purines from RNA and DNA precursor pools, thus preventing their incorporation into RNA and DNA and avoiding chromosomal lesions. This is Inosine triphosphate pyrophosphatase from Schizosaccharomyces pombe (strain 972 / ATCC 24843) (Fission yeast).